Consider the following 278-residue polypeptide: Reaction center protein L chain (278 aa).

A run of 3 helical transmembrane segments spans residues 33-56 (GFFG…GATI), 90-118 (GLWQ…RKLG), and 121-146 (FHIP…ILMG). The (7R,8Z)-bacteriochlorophyll b site is built by His-159 and His-179. Residues 176–205 (NPAHMLAITFFFTNCLALSMHGSLILSVTN) form a helical membrane-spanning segment. His-196 lines the Fe cation pocket. Phe-222 serves as a coordination point for a ubiquinone. A helical transmembrane segment spans residues 231–257 (GALAIHRLGLFLALSAVFWSAVCIVIS). His-236 contacts Fe cation.

This sequence belongs to the reaction center PufL/M/PsbA/D family. As to quaternary structure, reaction center is composed of four bacteriochlorophylls, two bacteriopheophytins, two ubiquinones, one iron, and two highly hydrophobic polypeptide chains (designated L and M).

It is found in the cellular chromatophore membrane. Functionally, the reaction center is a membrane-bound complex that mediates the initial photochemical event in the electron transfer process of photosynthesis. This is Reaction center protein L chain (pufL) from Allochromatium vinosum (strain ATCC 17899 / DSM 180 / NBRC 103801 / NCIMB 10441 / D) (Chromatium vinosum).